The following is a 992-amino-acid chain: UPF0182 protein Mb3215c (992 aa).

7 consecutive transmembrane segments (helical) span residues 17-39 (RILI…LIDA), 59-81 (LATR…FGGL), 113-135 (LVGI…SYWA), 169-191 (LMLS…AHYI), 212-229 (LVSL…AYWL), 255-277 (VLPA…FSAI), and 284-306 (IPAI…WPLI). Positions 906 to 938 (PTEAAVPPSPAANPPPPASGPQPPPVTAAPPVP) are disordered. The segment covering 912–938 (PPSPAANPPPPASGPQPPPVTAAPPVP) has biased composition (pro residues).

Belongs to the UPF0182 family.

The protein localises to the cell membrane. The sequence is that of UPF0182 protein Mb3215c from Mycobacterium bovis (strain ATCC BAA-935 / AF2122/97).